The chain runs to 406 residues: Glutamyl-tRNA reductase (406 aa).

Residues Thr-51–Arg-54, Ser-101, Glu-106–Glu-108, and Gln-112 contribute to the substrate site. The active-site Nucleophile is Cys-52. Gly-180–Gly-185 is an NADP(+) binding site.

Belongs to the glutamyl-tRNA reductase family. As to quaternary structure, homodimer.

The enzyme catalyses (S)-4-amino-5-oxopentanoate + tRNA(Glu) + NADP(+) = L-glutamyl-tRNA(Glu) + NADPH + H(+). The protein operates within porphyrin-containing compound metabolism; protoporphyrin-IX biosynthesis; 5-aminolevulinate from L-glutamyl-tRNA(Glu): step 1/2. Catalyzes the NADPH-dependent reduction of glutamyl-tRNA(Glu) to glutamate 1-semialdehyde (GSA). This is Glutamyl-tRNA reductase from Caldivirga maquilingensis (strain ATCC 700844 / DSM 13496 / JCM 10307 / IC-167).